The following is a 111-amino-acid chain: Cytochrome c (111 aa).

Position 1 is an N-acetylalanine (Ala-1). 3 residues coordinate heme c: Cys-22, Cys-25, and His-26. Position 80 is an N6,N6,N6-trimethyllysine (Lys-80). Residue Met-88 coordinates heme c. Lys-94 bears the N6,N6,N6-trimethyllysine mark.

It belongs to the cytochrome c family. Post-translationally, binds 1 heme c group covalently per subunit.

It is found in the mitochondrion intermembrane space. In terms of biological role, electron carrier protein. The oxidized form of the cytochrome c heme group can accept an electron from the heme group of the cytochrome c1 subunit of cytochrome reductase. Cytochrome c then transfers this electron to the cytochrome oxidase complex, the final protein carrier in the mitochondrial electron-transport chain. The sequence is that of Cytochrome c from Sesamum indicum (Oriental sesame).